Here is a 277-residue protein sequence, read N- to C-terminus: Phosphate import ATP-binding protein PstB 2 (277 aa).

In terms of domain architecture, ABC transporter spans 31 to 272 (IEVPGLNLFY…PAKKQTEDYI (242 aa)). Position 63-70 (63-70 (GPSGCGKS)) interacts with ATP.

It belongs to the ABC transporter superfamily. Phosphate importer (TC 3.A.1.7) family. As to quaternary structure, the complex is composed of two ATP-binding proteins (PstB), two transmembrane proteins (PstC and PstA) and a solute-binding protein (PstS).

The protein localises to the cell inner membrane. It catalyses the reaction phosphate(out) + ATP + H2O = ADP + 2 phosphate(in) + H(+). Its function is as follows. Part of the ABC transporter complex PstSACB involved in phosphate import. Responsible for energy coupling to the transport system. This is Phosphate import ATP-binding protein PstB 2 from Pseudomonas syringae pv. syringae (strain B728a).